The primary structure comprises 181 residues: Oligoribonuclease (181 aa).

The 164-residue stretch at 8-171 (LVWIDMEMTG…DDIRESIAEL (164 aa)) folds into the Exonuclease domain. Residue Tyr-129 is part of the active site.

The protein belongs to the oligoribonuclease family.

It localises to the cytoplasm. 3'-to-5' exoribonuclease specific for small oligoribonucleotides. This is Oligoribonuclease from Aeromonas hydrophila subsp. hydrophila (strain ATCC 7966 / DSM 30187 / BCRC 13018 / CCUG 14551 / JCM 1027 / KCTC 2358 / NCIMB 9240 / NCTC 8049).